A 256-amino-acid polypeptide reads, in one-letter code: Triosephosphate isomerase (256 aa).

10–12 provides a ligand contact to substrate; that stretch reads NWK. His99 acts as the Electrophile in catalysis. Glu171 functions as the Proton acceptor in the catalytic mechanism. Substrate-binding positions include Gly177, Ser216, and 237-238; that span reads GG.

Belongs to the triosephosphate isomerase family. In terms of assembly, homodimer.

It is found in the cytoplasm. It catalyses the reaction D-glyceraldehyde 3-phosphate = dihydroxyacetone phosphate. Its pathway is carbohydrate biosynthesis; gluconeogenesis. It functions in the pathway carbohydrate degradation; glycolysis; D-glyceraldehyde 3-phosphate from glycerone phosphate: step 1/1. Involved in the gluconeogenesis. Catalyzes stereospecifically the conversion of dihydroxyacetone phosphate (DHAP) to D-glyceraldehyde-3-phosphate (G3P). In Colwellia psychrerythraea (strain 34H / ATCC BAA-681) (Vibrio psychroerythus), this protein is Triosephosphate isomerase.